Here is a 123-residue protein sequence, read N- to C-terminus: Integration host factor subunit alpha (123 aa).

This sequence belongs to the bacterial histone-like protein family. In terms of assembly, heterodimer of an alpha and a beta chain.

This protein is one of the two subunits of integration host factor, a specific DNA-binding protein that functions in genetic recombination as well as in transcriptional and translational control. The polypeptide is Integration host factor subunit alpha (Polaromonas naphthalenivorans (strain CJ2)).